Consider the following 82-residue polypeptide: MPKRILQGKVVSDKNEQTVTVLVERRFKHPLLHKTVRSSKKYRAHDADNQFKVGDTVRIVECAPISKTKRWTVLTETAEVSA.

This sequence belongs to the universal ribosomal protein uS17 family. In terms of assembly, part of the 30S ribosomal subunit.

Its function is as follows. One of the primary rRNA binding proteins, it binds specifically to the 5'-end of 16S ribosomal RNA. The chain is Small ribosomal subunit protein uS17 from Paracoccus denitrificans (strain Pd 1222).